A 168-amino-acid polypeptide reads, in one-letter code: CASP-like protein 4D1 (168 aa).

The Cytoplasmic segment spans residues 1–11; the sequence is MAPPPPSLASR. The helical transmembrane segment at 12 to 32 threads the bilayer; it reads MAALILRILTFIFLIASLVIL. Residues 33–57 are Extracellular-facing; it reads TTNTATLELDLVEVKVHFKDVYAYR. Residues 58-78 form a helical membrane-spanning segment; the sequence is YMLATIVIGLAYTVLQIAFTL. Residues 79–97 are Cytoplasmic-facing; sequence YYVATGNRMMSGDGNLAFD. A helical transmembrane segment spans residues 98–118; it reads FFGDKVISYILVTGAAAGFAS. Residues 119-144 are Extracellular-facing; that stretch reads TKDIKPVFSGSGDFDAFINKGYASAS. A helical transmembrane segment spans residues 145-165; that stretch reads LLLIGFVCTAVLSVFSSYALP. The Cytoplasmic segment spans residues 166-168; that stretch reads KQV.

The protein belongs to the Casparian strip membrane proteins (CASP) family. Homodimer and heterodimers.

It is found in the cell membrane. This Ricinus communis (Castor bean) protein is CASP-like protein 4D1.